Here is a 545-residue protein sequence, read N- to C-terminus: Membrane protein insertase YidC (545 aa).

Residues 6 to 26 (NLLLIALLFVSFMIWQAWQTD) traverse the membrane as a helical segment. The tract at residues 31-54 (PVAQTTQQTSNPATGDAASSAVPA) is disordered. 4 helical membrane-spanning segments follow: residues 342–362 (KFIH…TFIV), 417–437 (LGGC…YYML), 455–475 (LSAQ…MFFI), and 496–516 (PVIF…YYIV).

It belongs to the OXA1/ALB3/YidC family. Type 1 subfamily. In terms of assembly, interacts with the Sec translocase complex via SecD. Specifically interacts with transmembrane segments of nascent integral membrane proteins during membrane integration.

The protein localises to the cell inner membrane. Its function is as follows. Required for the insertion and/or proper folding and/or complex formation of integral membrane proteins into the membrane. Involved in integration of membrane proteins that insert both dependently and independently of the Sec translocase complex, as well as at least some lipoproteins. Aids folding of multispanning membrane proteins. The sequence is that of Membrane protein insertase YidC from Serratia proteamaculans (strain 568).